A 416-amino-acid polypeptide reads, in one-letter code: Exodeoxyribonuclease 7 large subunit (416 aa).

Positions 1 to 21 are disordered; that stretch reads MTEPDSKPKKGRAGRKKAEPV.

This sequence belongs to the XseA family. Heterooligomer composed of large and small subunits.

The protein localises to the cytoplasm. It carries out the reaction Exonucleolytic cleavage in either 5'- to 3'- or 3'- to 5'-direction to yield nucleoside 5'-phosphates.. Functionally, bidirectionally degrades single-stranded DNA into large acid-insoluble oligonucleotides, which are then degraded further into small acid-soluble oligonucleotides. This Deinococcus radiodurans (strain ATCC 13939 / DSM 20539 / JCM 16871 / CCUG 27074 / LMG 4051 / NBRC 15346 / NCIMB 9279 / VKM B-1422 / R1) protein is Exodeoxyribonuclease 7 large subunit.